We begin with the raw amino-acid sequence, 136 residues long: Large ribosomal subunit protein uL16c (136 aa).

The tract at residues 1-20 (MLSPKRTRFRKQHRGRMKGK) is disordered.

The protein belongs to the universal ribosomal protein uL16 family. Part of the 50S ribosomal subunit.

It is found in the plastid. Its subcellular location is the chloroplast. In Agrostis stolonifera (Creeping bentgrass), this protein is Large ribosomal subunit protein uL16c.